A 376-amino-acid polypeptide reads, in one-letter code: Arsenite methyltransferase (376 aa).

Residues Ser47 and Ser336 each carry the phosphoserine modification. The segment covering 354-363 (SDKMKPRHAP) has biased composition (basic and acidic residues). The tract at residues 354–376 (SDKMKPRHAPEGTGGCCGKRKNC) is disordered.

Belongs to the methyltransferase superfamily. Arsenite methyltransferase family.

It localises to the cytoplasm. Its subcellular location is the cytosol. It catalyses the reaction arsenic triglutathione + [thioredoxin]-dithiol + S-adenosyl-L-methionine + 2 H2O = methylarsonous acid + [thioredoxin]-disulfide + 3 glutathione + S-adenosyl-L-homocysteine + H(+). The enzyme catalyses arsenic triglutathione + 2 [thioredoxin]-dithiol + 2 S-adenosyl-L-methionine + H2O = dimethylarsinous acid + 2 [thioredoxin]-disulfide + 3 glutathione + 2 S-adenosyl-L-homocysteine + 2 H(+). It carries out the reaction arsenic triglutathione + 3 [thioredoxin]-dithiol + 3 S-adenosyl-L-methionine = trimethylarsine + 3 [thioredoxin]-disulfide + 3 glutathione + 3 S-adenosyl-L-homocysteine + 3 H(+). Catalyzes the transfer of a methyl group from AdoMet to trivalent arsenicals producing methylated and dimethylated arsenicals. It methylates arsenite to form methylarsonate, Me-AsO(3)H(2), which is reduced by methylarsonate reductase to methylarsonite, Me-As(OH)2. Methylarsonite is also a substrate and it is converted into the much less toxic compound dimethylarsinate (cacodylate), Me(2)As(O)-OH. In Mus musculus (Mouse), this protein is Arsenite methyltransferase (As3mt).